The chain runs to 443 residues: Signal recognition particle 54 kDa protein (443 aa).

GTP contacts are provided by residues 107–114 (GVQGSGKT), 189–193 (DTAGR), and 247–250 (TKLD).

It belongs to the GTP-binding SRP family. SRP54 subfamily. In terms of assembly, part of the signal recognition particle protein translocation system, which is composed of SRP and FtsY. Archaeal SRP consists of a 7S RNA molecule of 300 nucleotides and two protein subunits: SRP54 and SRP19.

The protein localises to the cytoplasm. The enzyme catalyses GTP + H2O = GDP + phosphate + H(+). Involved in targeting and insertion of nascent membrane proteins into the cytoplasmic membrane. Binds to the hydrophobic signal sequence of the ribosome-nascent chain (RNC) as it emerges from the ribosomes. The SRP-RNC complex is then targeted to the cytoplasmic membrane where it interacts with the SRP receptor FtsY. This Pyrococcus horikoshii (strain ATCC 700860 / DSM 12428 / JCM 9974 / NBRC 100139 / OT-3) protein is Signal recognition particle 54 kDa protein.